The primary structure comprises 566 residues: Urease subunit alpha (566 aa).

The Urease domain maps to 128 to 566 (GGVDTHIHFI…LPMAQRYFLF (439 aa)). The Ni(2+) site is built by H133, H135, and K216. K216 carries the post-translational modification N6-carboxylysine. H218 lines the substrate pocket. H245 and H271 together coordinate Ni(2+). Catalysis depends on H319, which acts as the Proton donor. D359 is a binding site for Ni(2+).

Belongs to the metallo-dependent hydrolases superfamily. Urease alpha subunit family. May form a heterohexamer of 3 UreC (alpha) and 3 UreAB (gamma/beta) subunits. May also form a heterotrimer of UreA (gamma), UreB (beta) and UreC (alpha) subunits. Three heterotrimers associate to form the active enzyme. The cofactor is Ni cation. Post-translationally, carboxylation allows a single lysine to coordinate two nickel ions.

The protein resides in the cytoplasm. It catalyses the reaction urea + 2 H2O + H(+) = hydrogencarbonate + 2 NH4(+). The protein operates within nitrogen metabolism; urea degradation; CO(2) and NH(3) from urea (urease route): step 1/1. This is Urease subunit alpha from Pseudomonas savastanoi pv. phaseolicola (strain 1448A / Race 6) (Pseudomonas syringae pv. phaseolicola (strain 1448A / Race 6)).